We begin with the raw amino-acid sequence, 765 residues long: ATP-dependent RNA helicase DBP4 (765 aa).

A Q motif motif is present at residues 48-76 (SQFSDLPITENTLKGLKEATFVSLTDIQK). The Helicase ATP-binding domain occupies 79 to 253 (IPIALKGEDL…RLSLTNPNKI (175 aa)). 92 to 99 (ARTGSGKT) is a binding site for ATP. The DEAD box signature appears at 201–204 (DEAD). Positions 267–439 (SLEQYYVKVP…SIRPQLQSLC (173 aa)) constitute a Helicase C-terminal domain. 2 stretches are compositionally biased toward basic and acidic residues: residues 655 to 668 (KISD…ERQK) and 720 to 738 (PVSK…KSKN). The interval 655-765 (KISDITDKEV…ESLTARLIGN (111 aa)) is disordered. Positions 744–756 (VEYDEPETLEDLE) are enriched in acidic residues.

Belongs to the DEAD box helicase family. DDX10/DBP4 subfamily. In terms of assembly, interacts with the U3 and U14 snoRNAs. Associates with pre-ribosomal complexes.

It localises to the nucleus. It is found in the nucleolus. It carries out the reaction ATP + H2O = ADP + phosphate + H(+). Functionally, ATP-dependent RNA helicase required for ribosome biogenesis. Involved in the release of U14 snoRNA in pre-ribosomal complexes. Required for pre-rRNA cleavage at site A2. This is ATP-dependent RNA helicase DBP4 (DBP4) from Candida albicans (strain SC5314 / ATCC MYA-2876) (Yeast).